Reading from the N-terminus, the 456-residue chain is Exodeoxyribonuclease 7 large subunit (456 aa).

Residues 1–103 (MLPSQSPAIF…DYQIIVESMQ (103 aa)) form a binds ssDNA, also required to bind the small subunit region.

This sequence belongs to the XseA family. Heterooligomer composed of two different subunits with an approximate ratio of 4:1 for small to large subunit. Also estimated to have a 6:1 ration for small to large subunits. Does not require a metal cofactor. serves as cofactor.

Its subcellular location is the cytoplasm. It catalyses the reaction Exonucleolytic cleavage in either 5'- to 3'- or 3'- to 5'-direction to yield nucleoside 5'-phosphates.. Its function is as follows. Bidirectionally degrades single-stranded DNA into large acid-insoluble oligonucleotides, which are then degraded further into small acid-soluble oligonucleotides. It can degrade 3' or 5' ss regions extending from the termini of duplex DNA molecules and displaced ss regions. It can also excise thymine dimers in vitro. ssDNA-binding requires both subunits. Required for production of the mature 5'-end of retron Ec78 or Ec83 msDNA. Overproduction of this subunit in the absence of an equivalent quantity of the small subunit is toxic, causing cell elongation and chromosome fragmentation or loss; its toxicity is mostly suppressed by RecA. The protein is Exodeoxyribonuclease 7 large subunit of Escherichia coli (strain K12).